The primary structure comprises 349 residues: GTP 3',8-cyclase (349 aa).

Residues 24–249 (PFGRAITYLR…VDSDYQTGGP (226 aa)) enclose the Radical SAM core domain. A GTP-binding site is contributed by Arg-33. [4Fe-4S] cluster contacts are provided by Cys-40 and Cys-44. Position 46 (Tyr-46) interacts with S-adenosyl-L-methionine. Residue Cys-47 participates in [4Fe-4S] cluster binding. Arg-82 lines the GTP pocket. Gly-86 serves as a coordination point for S-adenosyl-L-methionine. Thr-116 provides a ligand contact to GTP. Residue Ser-140 coordinates S-adenosyl-L-methionine. Lys-176 is a GTP binding site. Residue Met-210 coordinates S-adenosyl-L-methionine. [4Fe-4S] cluster-binding residues include Cys-273 and Cys-276. Residue 278-280 (RVR) participates in GTP binding. Cys-290 provides a ligand contact to [4Fe-4S] cluster.

This sequence belongs to the radical SAM superfamily. MoaA family. In terms of assembly, monomer and homodimer. Requires [4Fe-4S] cluster as cofactor.

The enzyme catalyses GTP + AH2 + S-adenosyl-L-methionine = (8S)-3',8-cyclo-7,8-dihydroguanosine 5'-triphosphate + 5'-deoxyadenosine + L-methionine + A + H(+). Its pathway is cofactor biosynthesis; molybdopterin biosynthesis. In terms of biological role, catalyzes the cyclization of GTP to (8S)-3',8-cyclo-7,8-dihydroguanosine 5'-triphosphate. The chain is GTP 3',8-cyclase from Agrobacterium fabrum (strain C58 / ATCC 33970) (Agrobacterium tumefaciens (strain C58)).